Here is a 375-residue protein sequence, read N- to C-terminus: Secreted LysM effector Vd4LysM (375 aa).

The signal sequence occupies residues 1-24 (MPSVTISSTMLAGLLLMLVPASSA). One can recognise a LysM 1 domain in the interval 57 to 104 (SWWWDNEGQIPCANMPAEWGITMQDFLRWNPSITSSCGNFLNGRSYCV). A disordered region spans residues 108–139 (GEEPPVPGTPTTTTAPATTTKPSNGITTPQPI). Positions 116-129 (TPTTTTAPATTTKP) are enriched in low complexity. Residues 149–195 (KFHYISEGDRCQDILSYQKITLADFFKWNPAVKSDCSGLWSKTNACV) enclose the LysM 2 domain. Over residues 206–217 (TTTTKPATPTTP) the composition is skewed to low complexity. Positions 206–225 (TTTTKPATPTTPSNGITTPQ) are disordered. Residues 237-283 (KFHYISEGDRCQDILSYQKITQADFFKWNPAVKSDCSGLWSKTHACV) form the LysM 3 domain. The segment at 287–317 (GGQAPPPTPTTTKPTTTKPPGNGVTTPTPTQ) is disordered. The span at 296-317 (TTTKPTTTKPPGNGVTTPTPTQ) shows a compositional bias: low complexity. The LysM 4 domain maps to 326–372 (KFHFVSPGNTCQQIVSYQKITMANFVKWNSGAGSGCNNLWGNTHACV).

This sequence belongs to the secreted LysM effector family.

Might have a role in sequestration of chitin oligosaccharides (breakdown products of fungal cell walls that are released during invasion and act as triggers of host immunity) to dampen host defense. Does not play an important role during host colonization. This Verticillium dahliae (strain VdLs.17 / ATCC MYA-4575 / FGSC 10137) (Verticillium wilt) protein is Secreted LysM effector Vd4LysM.